The primary structure comprises 419 residues: Large ribosomal subunit protein uL4 (419 aa).

Alanine 2 carries the N-acetylalanine modification. At lysine 14 the chain carries N6-acetyllysine. Arginine 97 is subject to Omega-N-methylarginine. Lysine 106 bears the N6-acetyllysine mark. Lysine 239 participates in a covalent cross-link: Glycyl lysine isopeptide (Lys-Gly) (interchain with G-Cter in SUMO2). At lysine 259 the chain carries N6-acetyllysine. Threonine 266 is modified (phosphothreonine). Residues serine 290 and serine 295 each carry the phosphoserine modification. A Citrulline modification is found at arginine 300. Lysine 327 participates in a covalent cross-link: Glycyl lysine isopeptide (Lys-Gly) (interchain with G-Cter in SUMO2). 2 positions are modified to N6-acetyllysine: lysine 333 and lysine 353. N6-acetyllysine; alternate is present on lysine 364. Residue lysine 364 forms a Glycyl lysine isopeptide (Lys-Gly) (interchain with G-Cter in SUMO1); alternate linkage. Over residues 364–379 (KSEKVVPEKGTADKKP) the composition is skewed to basic and acidic residues. The disordered stretch occupies residues 364–419 (KSEKVVPEKGTADKKPAVGKKGKKVDAKKQKPAGKKVVAKKPAEKKPTTEEKKPAA). Position 365 is a phosphoserine (serine 365). The span at 393–402 (QKPAGKKVVA) shows a compositional bias: basic residues. A compositionally biased stretch (basic and acidic residues) spans 404 to 419 (KPAEKKPTTEEKKPAA).

Belongs to the universal ribosomal protein uL4 family. As to quaternary structure, component of the large ribosomal subunit. May bind IPO9 with low affinity. Interacts with RBM3. In terms of processing, citrullinated by PADI4.

Its subcellular location is the cytoplasm. Functionally, component of the large ribosomal subunit. The ribosome is a large ribonucleoprotein complex responsible for the synthesis of proteins in the cell. The chain is Large ribosomal subunit protein uL4 (Rpl4) from Mus musculus (Mouse).